The following is a 385-amino-acid chain: Glucans biosynthesis protein C (385 aa).

10 helical membrane passes run 17–37 (AWLM…SHTW), 60–80 (MQVF…RYPL), 91–111 (VGIP…IMLQ), 137–157 (ISHL…VWIF), 173–193 (KFSM…YAVI), 212–232 (FIVM…LAFI), 239–259 (LFTT…VAYL), 274–294 (TESV…FSFG), 311–331 (ASLF…AYIT), and 338–358 (WLGF…LYEI).

The protein belongs to the acyltransferase 3 family. OpgC subfamily.

Its subcellular location is the cell membrane. The protein operates within glycan metabolism; osmoregulated periplasmic glucan (OPG) biosynthesis. Its function is as follows. Necessary for the succinyl substitution of periplasmic glucans. Could catalyze the transfer of succinyl residues from the cytoplasmic side of the membrane to the nascent glucan backbones on the periplasmic side of the membrane. The protein is Glucans biosynthesis protein C of Escherichia coli (strain K12 / MC4100 / BW2952).